The chain runs to 463 residues: NADH dehydrogenase [ubiquinone] iron-sulfur protein 2, mitochondrial (463 aa).

The transit peptide at 1 to 33 (MAALRALCRLRGAAAQVLRPGAGVRLPIQPSRG) directs the protein to the mitochondrion. Lysine 62 bears the N6-acetyllysine mark. Arginine 118 is subject to Symmetric dimethylarginine. Positions 326, 332, and 347 each coordinate [4Fe-4S] cluster.

This sequence belongs to the complex I 49 kDa subunit family. As to quaternary structure, core subunit of respiratory chain NADH dehydrogenase (Complex I) which is composed of 45 different subunits. Component of the iron-sulfur (IP) fragment of the enzyme. Interacts with NDUFAF3. Interacts with NDUFAF7. Interacts with CERS2. It depends on [4Fe-4S] cluster as a cofactor. In terms of processing, dimethylation at Arg-118 by NDUFAF7 takes place after NDUFS2 assembles into the complex I, leading to stabilize the early intermediate complex.

It localises to the mitochondrion inner membrane. The catalysed reaction is a ubiquinone + NADH + 5 H(+)(in) = a ubiquinol + NAD(+) + 4 H(+)(out). Its function is as follows. Core subunit of the mitochondrial membrane respiratory chain NADH dehydrogenase (Complex I) which catalyzes electron transfer from NADH through the respiratory chain, using ubiquinone as an electron acceptor. Essential for the catalytic activity and assembly of complex I. Redox-sensitive, critical component of the oxygen-sensing pathway in the pulmonary vasculature which plays a key role in acute pulmonary oxygen-sensing and hypoxic pulmonary vasoconstriction. Plays an important role in carotid body sensing of hypoxia. Essential for glia-like neural stem and progenitor cell proliferation, differentiation and subsequent oligodendrocyte or neuronal maturation. The polypeptide is NADH dehydrogenase [ubiquinone] iron-sulfur protein 2, mitochondrial (NDUFS2) (Bos taurus (Bovine)).